The sequence spans 210 residues: MTNWNYQLTHFVTSAPDIRHLPADTGIEVAFAGRSNAGKSSALNTLTNQKNLARTSKTPGRTQLINLFEVAEGKRLVDLPGYGYAQVPEEMKIKWQRALGEYLEKRLCLKGLVVLMDIRHPLKDLDQQMIEWAVESDIQVLVLLTKADKLASGARKAQVNMVREAVLAFNGDVQVEPFSSLKKSGVDKLRQKLDSWFNEIPPQEAVEDAE.

The region spanning 25–199 (TGIEVAFAGR…RQKLDSWFNE (175 aa)) is the EngB-type G domain. GTP contacts are provided by residues 33 to 40 (GRSNAGKS), 60 to 64 (GRTQL), 78 to 81 (DLPG), 145 to 148 (TKAD), and 178 to 180 (FSS). Mg(2+)-binding residues include serine 40 and threonine 62.

This sequence belongs to the TRAFAC class TrmE-Era-EngA-EngB-Septin-like GTPase superfamily. EngB GTPase family. Mg(2+) serves as cofactor.

Functionally, necessary for normal cell division and for the maintenance of normal septation. The sequence is that of Probable GTP-binding protein EngB from Klebsiella pneumoniae subsp. pneumoniae (strain ATCC 700721 / MGH 78578).